The following is a 174-amino-acid chain: Ribosome maturation factor RimP (174 aa).

Belongs to the RimP family.

It localises to the cytoplasm. Required for maturation of 30S ribosomal subunits. The chain is Ribosome maturation factor RimP from Acinetobacter baumannii (strain SDF).